Consider the following 86-residue polypeptide: Small ribosomal subunit protein bS20 (86 aa).

Positions methionine 1–methionine 22 are disordered.

Belongs to the bacterial ribosomal protein bS20 family.

Functionally, binds directly to 16S ribosomal RNA. The protein is Small ribosomal subunit protein bS20 of Thioalkalivibrio sulfidiphilus (strain HL-EbGR7).